Here is a 355-residue protein sequence, read N- to C-terminus: Capsular polysaccharide biosynthesis glycosyltransferase CapH (355 aa).

The protein belongs to the glycosyltransferase group 1 family. Glycosyltransferase 4 subfamily.

It functions in the pathway capsule biogenesis; capsule polysaccharide biosynthesis. Required for the biosynthesis of type 1 capsular polysaccharide. The sequence is that of Capsular polysaccharide biosynthesis glycosyltransferase CapH (capH) from Staphylococcus aureus.